A 153-amino-acid chain; its full sequence is Endoribonuclease YbeY (153 aa).

3 residues coordinate Zn(2+): His-118, His-122, and His-128.

This sequence belongs to the endoribonuclease YbeY family. The cofactor is Zn(2+).

Its subcellular location is the cytoplasm. Single strand-specific metallo-endoribonuclease involved in late-stage 70S ribosome quality control and in maturation of the 3' terminus of the 16S rRNA. The polypeptide is Endoribonuclease YbeY (Staphylococcus haemolyticus (strain JCSC1435)).